A 171-amino-acid chain; its full sequence is Small ribosomal subunit protein uS4 (171 aa).

The 65-residue stretch at R103–A167 folds into the S4 RNA-binding domain.

The protein belongs to the universal ribosomal protein uS4 family. In terms of assembly, part of the 30S ribosomal subunit. Contacts protein S5. The interaction surface between S4 and S5 is involved in control of translational fidelity.

One of the primary rRNA binding proteins, it binds directly to 16S rRNA where it nucleates assembly of the body of the 30S subunit. Its function is as follows. With S5 and S12 plays an important role in translational accuracy. This is Small ribosomal subunit protein uS4 from Methanothermobacter thermautotrophicus (strain ATCC 29096 / DSM 1053 / JCM 10044 / NBRC 100330 / Delta H) (Methanobacterium thermoautotrophicum).